Here is an 81-residue protein sequence, read N- to C-terminus: Photosystem I iron-sulfur center (81 aa).

2 4Fe-4S ferredoxin-type domains span residues Ser-2–Trp-31 and Ile-39–Tyr-68. [4Fe-4S] cluster contacts are provided by Cys-11, Cys-14, Cys-17, Cys-21, Cys-48, Cys-51, Cys-54, and Cys-58.

The eukaryotic PSI reaction center is composed of at least 11 subunits. The cofactor is [4Fe-4S] cluster.

Its subcellular location is the plastid. The protein localises to the chloroplast thylakoid membrane. It carries out the reaction reduced [plastocyanin] + hnu + oxidized [2Fe-2S]-[ferredoxin] = oxidized [plastocyanin] + reduced [2Fe-2S]-[ferredoxin]. Functionally, apoprotein for the two 4Fe-4S centers FA and FB of photosystem I (PSI); essential for photochemical activity. FB is the terminal electron acceptor of PSI, donating electrons to ferredoxin. The C-terminus interacts with PsaA/B/D and helps assemble the protein into the PSI complex. Required for binding of PsaD and PsaE to PSI. PSI is a plastocyanin-ferredoxin oxidoreductase, converting photonic excitation into a charge separation, which transfers an electron from the donor P700 chlorophyll pair to the spectroscopically characterized acceptors A0, A1, FX, FA and FB in turn. This chain is Photosystem I iron-sulfur center, found in Drimys granadensis.